A 781-amino-acid chain; its full sequence is uncharacterized protein (781 aa).

Disordered regions lie at residues 1–27 (MKKDEKNNMDESLEEYDEENYTSELDD) and 56–268 (NLHI…SDVH). Over residues 11 to 27 (ESLEEYDEENYTSELDD) the composition is skewed to acidic residues. The segment covering 57 to 73 (LHIDEKSKGNIHDDTNK) has biased composition (basic and acidic residues). Basic residues predominate over residues 80 to 94 (KRKGKLNNKKLKLKK). The span at 99–116 (SDEEEENDKNDKNDDDQY) shows a compositional bias: acidic residues. 4 stretches are compositionally biased toward basic and acidic residues: residues 123–144 (DEDRKKSNNKKKEQSKKIKGDN), 170–188 (EKNHEDEKKKTDIIDHVSV), 216–227 (KTSKKNKNDKTN), and 251–268 (DDYHSTSSYEHEKSSDVH). Positions 616 to 655 (NDTYTLSKLNNQINELTKKINILRGNLDKARKNHAAMKSN) form a coiled coil.

This is an uncharacterized protein from Plasmodium falciparum (isolate 3D7).